The following is a 181-amino-acid chain: Transmembrane protein 47 (181 aa).

Residue A2 is modified to N-acetylalanine. 4 helical membrane passes run 21-41 (LVGL…VLSP), 83-103 (ALLL…LISI), 115-135 (VAVM…LYPI), and 152-172 (GYGL…LYCL).

This sequence belongs to the TMEM47 family. Interacts with CTNNB1, CTNNA1, PRKCI, PARD6B, FYB1. Expressed in adult brain, fetal brain, cerebellum, heart, lung, prostate and thyroid.

It localises to the membrane. The protein resides in the cell junction. Its subcellular location is the adherens junction. In terms of biological role, regulates cell junction organization in epithelial cells. May play a role in the transition from adherens junction to tight junction assembly. May regulate F-actin polymerization required for tight junctional localization dynamics and affect the junctional localization of PARD6B. During podocyte differentiation may negatively regulate activity of FYN and subsequently the abundance of nephrin. This is Transmembrane protein 47 (TMEM47) from Homo sapiens (Human).